Here is a 550-residue protein sequence, read N- to C-terminus: MRAEQYLKTCLECTIKKLGYTWPKKAVIEIPQNTLHGDLATNIALVLANNIGINPKNIAEKIAEKLQQESTSFSSVSVAGPGFLNITFSPTFWQKTINHILSKGSSYGSCQLGNKQKVLIEYVSANPTGPLHIGHGRGAAIGDTLARLLRFTGYNVTTEYYINDAGRQMQLLGLSIWLRIKELSGIQVTWPEEYYKGTYIIEIAKALLEEQPDIISYTDIDGEQASFHFGMNVILNGIKQDLKTFKVEHEEWFSERTLIKTNAIEQTLKALECTGLTFEKEGALWFQSTVFGDDKDRVLRKSDKSLTYFALDIAYHYTKYNRGFDRIIDILGADHHGYIARIKAAMQAFGHDPMTFDIILIQLVSLLENGIQVAMSTRAGQFEKLIDVINEVGVDAARFMFLLRKSDAHLDFDLELVKQRTMNNPVYYVQYAYARICSIIRKAHDLGFTITDVNEVPLSNITTKDELNLLRLLDKFEDVIYNAAQHLAPHYITHYLMELAGELHSYYAKYPVLQSNEKTIVLSRLALLQAVGQVIYNALNILGVTAPKNM.

A 'HIGH' region motif is present at residues 125–135 (ANPTGPLHIGH).

This sequence belongs to the class-I aminoacyl-tRNA synthetase family. In terms of assembly, monomer.

It localises to the cytoplasm. It carries out the reaction tRNA(Arg) + L-arginine + ATP = L-arginyl-tRNA(Arg) + AMP + diphosphate. The sequence is that of Arginine--tRNA ligase from Lawsonia intracellularis (strain PHE/MN1-00).